The sequence spans 376 residues: 1-acyl-sn-glycerol-3-phosphate acyltransferase 3 (376 aa).

2 helical membrane-spanning segments follow: residues 14 to 34 and 49 to 69; these read VLFL…FIIV and VAEL…CIKI. The HXXXXD motif signature appears at 92–97; that stretch reads HRSDID. 3 helical membrane passes run 98-118, 306-326, and 335-355; these read WLIG…LAIM, LIVV…LLQW, and IILL…ILIQ.

Belongs to the 1-acyl-sn-glycerol-3-phosphate acyltransferase family. As to expression, predominantly expressed in pollen.

It localises to the membrane. The catalysed reaction is a 1-acyl-sn-glycero-3-phosphate + an acyl-CoA = a 1,2-diacyl-sn-glycero-3-phosphate + CoA. It participates in phospholipid metabolism; CDP-diacylglycerol biosynthesis; CDP-diacylglycerol from sn-glycerol 3-phosphate: step 2/3. Converts lysophosphatidic acid (LPA) into phosphatidic acid by incorporating acyl moiety at the 2 position. Has preference for C-18-CoA substrates compared to C-16-CoA substrates. The polypeptide is 1-acyl-sn-glycerol-3-phosphate acyltransferase 3 (LPAT3) (Arabidopsis thaliana (Mouse-ear cress)).